Reading from the N-terminus, the 81-residue chain is Putative membrane protein insertion efficiency factor (81 aa).

This sequence belongs to the UPF0161 family.

It is found in the cell membrane. In terms of biological role, could be involved in insertion of integral membrane proteins into the membrane. The chain is Putative membrane protein insertion efficiency factor from Geobacillus kaustophilus (strain HTA426).